The sequence spans 506 residues: ATP synthase subunit alpha (506 aa).

Residues 119-129 (GPIEYEGKRPI) are compositionally biased toward basic and acidic residues. Residues 119–138 (GPIEYEGKRPIESPAPPIVR) form a disordered region. Position 169 to 176 (169 to 176 (GDRQTGKT)) interacts with ATP.

It belongs to the ATPase alpha/beta chains family. In terms of assembly, F-type ATPases have 2 components, CF(1) - the catalytic core - and CF(0) - the membrane proton channel. CF(1) has five subunits: alpha(3), beta(3), gamma(1), delta(1), epsilon(1). CF(0) has three main subunits: a(1), b(2) and c(9-12). The alpha and beta chains form an alternating ring which encloses part of the gamma chain. CF(1) is attached to CF(0) by a central stalk formed by the gamma and epsilon chains, while a peripheral stalk is formed by the delta and b chains.

The protein localises to the cell membrane. It catalyses the reaction ATP + H2O + 4 H(+)(in) = ADP + phosphate + 5 H(+)(out). In terms of biological role, produces ATP from ADP in the presence of a proton gradient across the membrane. The alpha chain is a regulatory subunit. The sequence is that of ATP synthase subunit alpha from Caldanaerobacter subterraneus subsp. tengcongensis (strain DSM 15242 / JCM 11007 / NBRC 100824 / MB4) (Thermoanaerobacter tengcongensis).